We begin with the raw amino-acid sequence, 57 residues long: UPF0391 membrane protein RL4195 (57 aa).

2 helical membrane-spanning segments follow: residues 4–24 and 33–53; these read WALIFFVISIIAGFFGFSGVS and VLFGIALVIFLIFLVLALMAG.

It belongs to the UPF0391 family.

The protein localises to the cell membrane. The chain is UPF0391 membrane protein RL4195 from Rhizobium johnstonii (strain DSM 114642 / LMG 32736 / 3841) (Rhizobium leguminosarum bv. viciae).